We begin with the raw amino-acid sequence, 292 residues long: Small ribosomal subunit biogenesis GTPase RsgA (292 aa).

Residues 64–221 form the CP-type G domain; sequence RSELFRPAVA…LVDTPGFSSL (158 aa). GTP is bound by residues 113–116 and 164–172; these read NKMD and GPSGVGKST. Zn(2+) contacts are provided by C245, C250, H252, and C258.

The protein belongs to the TRAFAC class YlqF/YawG GTPase family. RsgA subfamily. Monomer. Associates with 30S ribosomal subunit, binds 16S rRNA. Requires Zn(2+) as cofactor.

It is found in the cytoplasm. In terms of biological role, one of several proteins that assist in the late maturation steps of the functional core of the 30S ribosomal subunit. Helps release RbfA from mature subunits. May play a role in the assembly of ribosomal proteins into the subunit. Circularly permuted GTPase that catalyzes slow GTP hydrolysis, GTPase activity is stimulated by the 30S ribosomal subunit. This chain is Small ribosomal subunit biogenesis GTPase RsgA, found in Clostridium botulinum (strain Loch Maree / Type A3).